A 142-amino-acid chain; its full sequence is Large-conductance mechanosensitive channel (142 aa).

3 helical membrane passes run 14–34, 38–58, and 82–102; these read VVDL…VNSL, VIMP…YYIP, and GQFL…FMVI.

It belongs to the MscL family. As to quaternary structure, homopentamer.

Its subcellular location is the cell inner membrane. Its function is as follows. Channel that opens in response to stretch forces in the membrane lipid bilayer. May participate in the regulation of osmotic pressure changes within the cell. This Methylorubrum populi (strain ATCC BAA-705 / NCIMB 13946 / BJ001) (Methylobacterium populi) protein is Large-conductance mechanosensitive channel.